The following is a 366-amino-acid chain: Glycine betaine monooxygenase reductase subunit (366 aa).

Residues 16 to 119 enclose the FAD-binding FR-type domain; that stretch reads NGRHLVRCVK…HGPVGLFNAI (104 aa). The 2Fe-2S ferredoxin-type domain maps to 282–366; sequence HQVEFTATGK…VPKGDVVIDY (85 aa). 4 residues coordinate [2Fe-2S] cluster: C316, C321, C324, and C354.

In the N-terminal section; belongs to the FAD-binding oxidoreductase type 6 family. As to quaternary structure, the system is composed of an oxygenase subunit (GbcA) and a reductase subunit (GbcB). It depends on FAD as a cofactor. The cofactor is [2Fe-2S] cluster.

The enzyme catalyses glycine betaine + NADH + O2 + H(+) = N,N-dimethylglycine + formaldehyde + NAD(+) + H2O. Involved in degradation of glycine betaine. Part of a Rieske-type oxygenase system that catalyzes the conversion of glycine betaine (GB) to dimethylglycine (DMG). This subunit is the ferredoxin reductase component of the system. Required for growth on choline and GB, but not for growth on DMG. In Pseudomonas aeruginosa (strain ATCC 15692 / DSM 22644 / CIP 104116 / JCM 14847 / LMG 12228 / 1C / PRS 101 / PAO1), this protein is Glycine betaine monooxygenase reductase subunit.